The following is a 289-amino-acid chain: Protein shisa-2 homolog (289 aa).

The N-terminal stretch at 1-27 is a signal peptide; sequence MWAGCHPDAASLLRLLLAALLAAGALA. Over 28 to 104 the chain is Extracellular; sequence SGEYCHGWLD…RADKDGPDGS (77 aa). Residues 81-102 form a disordered region; the sequence is GCDNDRQQGAGEPGRADKDGPD. The chain crosses the membrane as a helical span at residues 105-125; that stretch reads AVPIYVPFLIVGSVFVAFIVL. The Cytoplasmic segment spans residues 126–289; that stretch reads GSLVAACCCR…EQKMYPAVTV (164 aa). Residues 162 to 198 are disordered; it reads PSASTSRGSSSRQSSTAASSSSSANSGARAPPTRSQT. Residues 163–191 are compositionally biased toward low complexity; sequence SASTSRGSSSRQSSTAASSSSSANSGARA.

The protein belongs to the shisa family.

It localises to the endoplasmic reticulum membrane. Plays an essential role in the maturation of presomitic mesoderm cells by individual attenuation of both FGF and WNT signaling. In Bos taurus (Bovine), this protein is Protein shisa-2 homolog (SHISA2).